Here is a 380-residue protein sequence, read N- to C-terminus: Chaperone protein DnaJ (380 aa).

The region spanning 5 to 70 is the J domain; it reads DFYDVLGVNR…QKRAAYDQYG (66 aa). The CR-type zinc-finger motif lies at 139–217; the sequence is GCEKQIRIPT…CHGAGRVKSQ (79 aa). Positions 152, 155, 169, 172, 191, 194, 205, and 208 each coordinate Zn(2+). CXXCXGXG motif repeat units lie at residues 152–159, 169–176, 191–198, and 205–212; these read CSHCHGSG, CPTCGGAG, CPTCHGSG, and CNICHGAG.

This sequence belongs to the DnaJ family. In terms of assembly, homodimer. Zn(2+) serves as cofactor.

It is found in the cytoplasm. In terms of biological role, participates actively in the response to hyperosmotic and heat shock by preventing the aggregation of stress-denatured proteins and by disaggregating proteins, also in an autonomous, DnaK-independent fashion. Unfolded proteins bind initially to DnaJ; upon interaction with the DnaJ-bound protein, DnaK hydrolyzes its bound ATP, resulting in the formation of a stable complex. GrpE releases ADP from DnaK; ATP binding to DnaK triggers the release of the substrate protein, thus completing the reaction cycle. Several rounds of ATP-dependent interactions between DnaJ, DnaK and GrpE are required for fully efficient folding. Also involved, together with DnaK and GrpE, in the DNA replication of plasmids through activation of initiation proteins. This is Chaperone protein DnaJ from Laribacter hongkongensis (strain HLHK9).